The sequence spans 207 residues: MATIDVFDINKNKVGEMDLSDAVFNGDVREYLIHEAVKVQLANRRAGTVGVKNRAAVSGGGKKPFKQKGTGQARQGCIRAPHYVGGGVAFGPQAKTYALSMNKKARKAAVRSALSMLFKENKLSVLDCLSLPSISTKGFVGVLKTFDVTKTLVIIDEANTNLELSARNVKDVKVLKAEHLNVFDIVKFNNIILTQSAVRKIEGALQS.

This sequence belongs to the universal ribosomal protein uL4 family. Part of the 50S ribosomal subunit.

Functionally, one of the primary rRNA binding proteins, this protein initially binds near the 5'-end of the 23S rRNA. It is important during the early stages of 50S assembly. It makes multiple contacts with different domains of the 23S rRNA in the assembled 50S subunit and ribosome. Forms part of the polypeptide exit tunnel. This chain is Large ribosomal subunit protein uL4, found in Geobacter metallireducens (strain ATCC 53774 / DSM 7210 / GS-15).